A 128-amino-acid chain; its full sequence is Ribonuclease P protein component (128 aa).

Belongs to the RnpA family. In terms of assembly, consists of a catalytic RNA component (M1 or rnpB) and a protein subunit.

It catalyses the reaction Endonucleolytic cleavage of RNA, removing 5'-extranucleotides from tRNA precursor.. RNaseP catalyzes the removal of the 5'-leader sequence from pre-tRNA to produce the mature 5'-terminus. It can also cleave other RNA substrates such as 4.5S RNA. The protein component plays an auxiliary but essential role in vivo by binding to the 5'-leader sequence and broadening the substrate specificity of the ribozyme. This is Ribonuclease P protein component from Methylococcus capsulatus (strain ATCC 33009 / NCIMB 11132 / Bath).